Consider the following 107-residue polypeptide: Thiosulfate sulfurtransferase GlpE (107 aa).

Positions 19-107 constitute a Rhodanese domain; the sequence is QDLNAVLVDI…WHKAGLPVEK (89 aa). Cys-67 (cysteine persulfide intermediate) is an active-site residue.

It belongs to the GlpE family.

The protein localises to the cytoplasm. The catalysed reaction is thiosulfate + hydrogen cyanide = thiocyanate + sulfite + 2 H(+). It catalyses the reaction thiosulfate + [thioredoxin]-dithiol = [thioredoxin]-disulfide + hydrogen sulfide + sulfite + 2 H(+). Its function is as follows. Transferase that catalyzes the transfer of sulfur from thiosulfate to thiophilic acceptors such as cyanide or dithiols. May function in a CysM-independent thiosulfate assimilation pathway by catalyzing the conversion of thiosulfate to sulfite, which can then be used for L-cysteine biosynthesis. The protein is Thiosulfate sulfurtransferase GlpE of Aliivibrio fischeri (strain ATCC 700601 / ES114) (Vibrio fischeri).